The chain runs to 1188 residues: DNA-directed RNA polymerase subunit beta (1188 aa).

Belongs to the RNA polymerase beta chain family. As to quaternary structure, the RNAP catalytic core consists of 2 alpha, 1 beta, 1 beta' and 1 omega subunit. When a sigma factor is associated with the core the holoenzyme is formed, which can initiate transcription.

The catalysed reaction is RNA(n) + a ribonucleoside 5'-triphosphate = RNA(n+1) + diphosphate. Functionally, DNA-dependent RNA polymerase catalyzes the transcription of DNA into RNA using the four ribonucleoside triphosphates as substrates. This chain is DNA-directed RNA polymerase subunit beta, found in Streptococcus gordonii (strain Challis / ATCC 35105 / BCRC 15272 / CH1 / DL1 / V288).